Here is an 887-residue protein sequence, read N- to C-terminus: Alanine--tRNA ligase (887 aa).

The Zn(2+) site is built by H581, H585, C683, and H687.

This sequence belongs to the class-II aminoacyl-tRNA synthetase family. Zn(2+) is required as a cofactor.

The protein localises to the cytoplasm. The catalysed reaction is tRNA(Ala) + L-alanine + ATP = L-alanyl-tRNA(Ala) + AMP + diphosphate. Catalyzes the attachment of alanine to tRNA(Ala) in a two-step reaction: alanine is first activated by ATP to form Ala-AMP and then transferred to the acceptor end of tRNA(Ala). Also edits incorrectly charged Ser-tRNA(Ala) and Gly-tRNA(Ala) via its editing domain. The polypeptide is Alanine--tRNA ligase (Ehrlichia ruminantium (strain Welgevonden)).